The primary structure comprises 533 residues: MDYVPWIGNGYRYGKNHRGVDDITAPKTGAGSSSGTSTNTSGSRSFLPTFSNVGVGLKANVQATLGGSQTTTTGGSKWPTLDQANLLLWTGSGWRNDKNGQSDENHTTFKSATGSGQQGGSSGTSAGNPDSLKQDKISKSGDSLSVVDTGQGDDTHYANLPPSITPTSDWPNALSFTNKNNAQRVQLFLRGLLDSIPVLVNKSGQDDNSKFKAEHQKWKYSDFKSDQTKLNLPAYGEVNGLLNPALVETYFGTTRAGGSGNQNRTTVPGIGFKIPEQNNDSKAVLITPGLAWTPQDVGNLVVSGTTVSFQLGGWLVTFTDFVKPRSGYLGLQLTGLDVSEATQRELIWAPRPWAAFRGSWVNRLGRVESVWDFKGVWADQAHSAVSESQAATSGTTTATGAALPEHPNALAFQVSVVEASAYKPNTSSGQTQSTNSSPYLHLIQPKKVTQSDKLDDDLKNLLDPNEVRARMLQSFGTENSTQAQPQSLKTTTPVFGAMSGTSAVCLVVGVPRRAQAQVNLAWISPPLNGWVGH.

2 disordered regions span residues lysine 15–serine 45 and serine 92–proline 166. Positions threonine 28–serine 45 are enriched in low complexity. The segment covering arginine 95–threonine 107 has biased composition (basic and acidic residues).

It belongs to the adhesin P1 family.

This chain is Putative adhesin P1-like protein MPN_409, found in Mycoplasma pneumoniae (strain ATCC 29342 / M129 / Subtype 1) (Mycoplasmoides pneumoniae).